The primary structure comprises 193 residues: Dual-action ribosomal maturation protein DarP (193 aa).

The span at 1–10 (MRGRDEETGE) shows a compositional bias: basic and acidic residues. Disordered stretches follow at residues 1–20 (MRGRDEETGEFRGASRSQQR) and 171–193 (QEQGLESGDSELEDGESASEDDE). Positions 178-193 (GDSELEDGESASEDDE) are enriched in acidic residues.

It belongs to the DarP family.

It is found in the cytoplasm. Its function is as follows. Member of a network of 50S ribosomal subunit biogenesis factors which assembles along the 30S-50S interface, preventing incorrect 23S rRNA structures from forming. Promotes peptidyl transferase center (PTC) maturation. The sequence is that of Dual-action ribosomal maturation protein DarP from Xanthomonas axonopodis pv. citri (strain 306).